A 232-amino-acid chain; its full sequence is Large ribosomal subunit protein uL1 (232 aa).

This sequence belongs to the universal ribosomal protein uL1 family. As to quaternary structure, part of the 50S ribosomal subunit.

Binds directly to 23S rRNA. The L1 stalk is quite mobile in the ribosome, and is involved in E site tRNA release. In terms of biological role, protein L1 is also a translational repressor protein, it controls the translation of the L11 operon by binding to its mRNA. The protein is Large ribosomal subunit protein uL1 of Burkholderia mallei (strain NCTC 10247).